Consider the following 469-residue polypeptide: Glutamate--tRNA ligase (469 aa).

Residues 9–19 carry the 'HIGH' region motif; sequence PSPTGFLHVGG. 4 residues coordinate Zn(2+): C98, C100, C125, and D127. The 'KMSKS' region motif lies at 236–240; it reads KLSKR. Residue K239 coordinates ATP.

Belongs to the class-I aminoacyl-tRNA synthetase family. Glutamate--tRNA ligase type 1 subfamily. As to quaternary structure, monomer. Requires Zn(2+) as cofactor.

The protein localises to the cytoplasm. It carries out the reaction tRNA(Glu) + L-glutamate + ATP = L-glutamyl-tRNA(Glu) + AMP + diphosphate. Its function is as follows. Catalyzes the attachment of glutamate to tRNA(Glu) in a two-step reaction: glutamate is first activated by ATP to form Glu-AMP and then transferred to the acceptor end of tRNA(Glu). The chain is Glutamate--tRNA ligase from Shewanella baltica (strain OS155 / ATCC BAA-1091).